The chain runs to 446 residues: Phosphoglucosamine mutase (446 aa).

Residue serine 88 is the Phosphoserine intermediate of the active site. Mg(2+)-binding residues include serine 88, aspartate 231, aspartate 233, and aspartate 235. Serine 88 carries the post-translational modification Phosphoserine.

This sequence belongs to the phosphohexose mutase family. The cofactor is Mg(2+). Activated by phosphorylation.

It carries out the reaction alpha-D-glucosamine 1-phosphate = D-glucosamine 6-phosphate. Its function is as follows. Catalyzes the conversion of glucosamine-6-phosphate to glucosamine-1-phosphate. This is Phosphoglucosamine mutase from Methanococcus vannielii (strain ATCC 35089 / DSM 1224 / JCM 13029 / OCM 148 / SB).